Reading from the N-terminus, the 34-residue chain is Colipase (34 aa).

2 cysteine pairs are disulfide-bonded: Cys12–Cys23 and Cys18–Cys34.

The protein belongs to the colipase family. Forms a 1:1 stoichiometric complex with pancreatic lipase. In terms of tissue distribution, expressed by the pancreas.

It is found in the secreted. Its function is as follows. Colipase is a cofactor of pancreatic lipase. It allows the lipase to anchor itself to the lipid-water interface. Without colipase the enzyme is washed off by bile salts, which have an inhibitory effect on the lipase. The protein is Colipase (CLPS) of Gallus gallus (Chicken).